A 129-amino-acid polypeptide reads, in one-letter code: Phosphoribosyl-AMP cyclohydrolase (129 aa).

A Mg(2+)-binding site is contributed by aspartate 94. Cysteine 95 contacts Zn(2+). Mg(2+) contacts are provided by aspartate 96 and aspartate 98. 2 residues coordinate Zn(2+): cysteine 111 and cysteine 118.

Belongs to the PRA-CH family. In terms of assembly, homodimer. Mg(2+) is required as a cofactor. The cofactor is Zn(2+).

It localises to the cytoplasm. It catalyses the reaction 1-(5-phospho-beta-D-ribosyl)-5'-AMP + H2O = 1-(5-phospho-beta-D-ribosyl)-5-[(5-phospho-beta-D-ribosylamino)methylideneamino]imidazole-4-carboxamide. It participates in amino-acid biosynthesis; L-histidine biosynthesis; L-histidine from 5-phospho-alpha-D-ribose 1-diphosphate: step 3/9. Functionally, catalyzes the hydrolysis of the adenine ring of phosphoribosyl-AMP. This Corynebacterium efficiens (strain DSM 44549 / YS-314 / AJ 12310 / JCM 11189 / NBRC 100395) protein is Phosphoribosyl-AMP cyclohydrolase.